A 238-amino-acid polypeptide reads, in one-letter code: UPF0758 protein Ajs_3450 (238 aa).

The region spanning 116–238 (VFDSPQAVQH…ALSMAEQGLV (123 aa)) is the MPN domain. Residues His-187, His-189, and Asp-200 each contribute to the Zn(2+) site. A JAMM motif motif is present at residues 187-200 (HNHPSGSVQPSRAD).

It belongs to the UPF0758 family.

The sequence is that of UPF0758 protein Ajs_3450 from Acidovorax sp. (strain JS42).